The primary structure comprises 122 residues: Small ribosomal subunit protein bS6 (122 aa).

The interval 97–122 (TAPSPMMKAVQKEDAAKSHRAEAPAA) is disordered. Basic and acidic residues predominate over residues 106-122 (VQKEDAAKSHRAEAPAA).

It belongs to the bacterial ribosomal protein bS6 family.

Binds together with bS18 to 16S ribosomal RNA. This chain is Small ribosomal subunit protein bS6, found in Janthinobacterium sp. (strain Marseille) (Minibacterium massiliensis).